Here is a 258-residue protein sequence, read N- to C-terminus: Serine protease sp-Eoc49 (258 aa).

The signal sequence occupies residues 1 to 18 (MVLIRVLANLLVLQLSYA). Residues 25 to 249 (VVGGGECNRN…YTDWIQSIIA (225 aa)) form the Peptidase S1 domain. Asn-44 carries N-linked (GlcNAc...) asparagine glycosylation. Cys-50 and Cys-66 are oxidised to a cystine. His-65 acts as the Charge relay system in catalysis. Residues Asn-79 and Asn-103 are each glycosylated (N-linked (GlcNAc...) asparagine). The Charge relay system role is filled by Asp-110. 3 cysteine pairs are disulfide-bonded: Cys-142/Cys-210, Cys-174/Cys-189, and Cys-200/Cys-225. Asn-154 carries an N-linked (GlcNAc...) asparagine glycan. Ser-204 acts as the Charge relay system in catalysis. A glycan (N-linked (GlcNAc...) asparagine) is linked at Asn-251.

Belongs to the peptidase S1 family. Snake venom subfamily. As to quaternary structure, monomer. As to expression, expressed by the venom gland.

Its subcellular location is the secreted. Functionally, snake venom serine protease that may act in the hemostasis system of the prey. This is Serine protease sp-Eoc49 from Echis ocellatus (Ocellated saw-scaled viper).